The sequence spans 107 residues: Putative regulatory protein BCG9842_A0044 (107 aa).

Belongs to the RemA family.

This chain is Putative regulatory protein BCG9842_A0044, found in Bacillus cereus (strain G9842).